Here is a 475-residue protein sequence, read N- to C-terminus: Ribulose bisphosphate carboxylase large chain (475 aa).

Positions 1–2 (MS) are excised as a propeptide. N-acetylproline is present on proline 3. Lysine 14 bears the N6,N6,N6-trimethyllysine mark. Asparagine 123 and threonine 173 together coordinate substrate. The active-site Proton acceptor is lysine 175. Lysine 177 is a substrate binding site. Residues lysine 201, aspartate 203, and glutamate 204 each coordinate Mg(2+). At lysine 201 the chain carries N6-carboxylysine. Histidine 294 serves as the catalytic Proton acceptor. Residues arginine 295, histidine 327, and serine 379 each coordinate substrate.

It belongs to the RuBisCO large chain family. Type I subfamily. Heterohexadecamer of 8 large chains and 8 small chains; disulfide-linked. The disulfide link is formed within the large subunit homodimers. It depends on Mg(2+) as a cofactor. Post-translationally, the disulfide bond which can form in the large chain dimeric partners within the hexadecamer appears to be associated with oxidative stress and protein turnover.

The protein resides in the plastid. It localises to the chloroplast. It carries out the reaction 2 (2R)-3-phosphoglycerate + 2 H(+) = D-ribulose 1,5-bisphosphate + CO2 + H2O. The catalysed reaction is D-ribulose 1,5-bisphosphate + O2 = 2-phosphoglycolate + (2R)-3-phosphoglycerate + 2 H(+). In terms of biological role, ruBisCO catalyzes two reactions: the carboxylation of D-ribulose 1,5-bisphosphate, the primary event in carbon dioxide fixation, as well as the oxidative fragmentation of the pentose substrate in the photorespiration process. Both reactions occur simultaneously and in competition at the same active site. The sequence is that of Ribulose bisphosphate carboxylase large chain from Calycanthus floridus var. glaucus (Eastern sweetshrub).